Consider the following 244-residue polypeptide: ATP synthase subunit b 2 (244 aa).

Residues 2–22 form a helical membrane-spanning segment; sequence LIDWFTIVAQIINFLILVFLL.

Belongs to the ATPase B chain family. F-type ATPases have 2 components, F(1) - the catalytic core - and F(0) - the membrane proton channel. F(1) has five subunits: alpha(3), beta(3), gamma(1), delta(1), epsilon(1). F(0) has four main subunits: a(1), b(1), b'(1) and c(10-14). The alpha and beta chains form an alternating ring which encloses part of the gamma chain. F(1) is attached to F(0) by a central stalk formed by the gamma and epsilon chains, while a peripheral stalk is formed by the delta, b and b' chains.

The protein resides in the cellular thylakoid membrane. F(1)F(0) ATP synthase produces ATP from ADP in the presence of a proton or sodium gradient. F-type ATPases consist of two structural domains, F(1) containing the extramembraneous catalytic core and F(0) containing the membrane proton channel, linked together by a central stalk and a peripheral stalk. During catalysis, ATP synthesis in the catalytic domain of F(1) is coupled via a rotary mechanism of the central stalk subunits to proton translocation. Its function is as follows. Component of the F(0) channel, it forms part of the peripheral stalk, linking F(1) to F(0). This Crocosphaera subtropica (strain ATCC 51142 / BH68) (Cyanothece sp. (strain ATCC 51142)) protein is ATP synthase subunit b 2.